The primary structure comprises 189 residues: Putative manganese efflux pump MntP (189 aa).

Helical transmembrane passes span 3–23, 41–61, 65–85, 103–123, 132–152, and 167–187; these read LSAT…ASIG, LIFG…GLFA, IMEW…MRMI, GFWL…AIGV, IVHT…LGMM, and ILGG…HLGY.

Belongs to the MntP (TC 9.B.29) family.

It is found in the cell inner membrane. Probably functions as a manganese efflux pump. The polypeptide is Putative manganese efflux pump MntP (Serratia proteamaculans (strain 568)).